The following is a 431-amino-acid chain: Histidine--tRNA ligase (431 aa).

This sequence belongs to the class-II aminoacyl-tRNA synthetase family. In terms of assembly, homodimer.

It is found in the cytoplasm. The enzyme catalyses tRNA(His) + L-histidine + ATP = L-histidyl-tRNA(His) + AMP + diphosphate + H(+). The polypeptide is Histidine--tRNA ligase (Finegoldia magna (strain ATCC 29328 / DSM 20472 / WAL 2508) (Peptostreptococcus magnus)).